The primary structure comprises 262 residues: Phosphatidylserine decarboxylase proenzyme (262 aa).

Residues D86, H142, and S226 each act as charge relay system; for autoendoproteolytic cleavage activity in the active site. S226 acts as the Schiff-base intermediate with substrate; via pyruvic acid; for decarboxylase activity in catalysis. Pyruvic acid (Ser); by autocatalysis is present on S226.

It belongs to the phosphatidylserine decarboxylase family. PSD-B subfamily. Prokaryotic type I sub-subfamily. As to quaternary structure, heterodimer of a large membrane-associated beta subunit and a small pyruvoyl-containing alpha subunit. Requires pyruvate as cofactor. In terms of processing, is synthesized initially as an inactive proenzyme. Formation of the active enzyme involves a self-maturation process in which the active site pyruvoyl group is generated from an internal serine residue via an autocatalytic post-translational modification. Two non-identical subunits are generated from the proenzyme in this reaction, and the pyruvate is formed at the N-terminus of the alpha chain, which is derived from the carboxyl end of the proenzyme. The autoendoproteolytic cleavage occurs by a canonical serine protease mechanism, in which the side chain hydroxyl group of the serine supplies its oxygen atom to form the C-terminus of the beta chain, while the remainder of the serine residue undergoes an oxidative deamination to produce ammonia and the pyruvoyl prosthetic group on the alpha chain. During this reaction, the Ser that is part of the protease active site of the proenzyme becomes the pyruvoyl prosthetic group, which constitutes an essential element of the active site of the mature decarboxylase.

It is found in the cell membrane. The enzyme catalyses a 1,2-diacyl-sn-glycero-3-phospho-L-serine + H(+) = a 1,2-diacyl-sn-glycero-3-phosphoethanolamine + CO2. It functions in the pathway phospholipid metabolism; phosphatidylethanolamine biosynthesis; phosphatidylethanolamine from CDP-diacylglycerol: step 2/2. Catalyzes the formation of phosphatidylethanolamine (PtdEtn) from phosphatidylserine (PtdSer). The chain is Phosphatidylserine decarboxylase proenzyme from Bacillus thuringiensis subsp. konkukian (strain 97-27).